Reading from the N-terminus, the 211-residue chain is Large ribosomal subunit protein uL3 (211 aa).

The segment at 125–148 (GPASHGSKKWHRRPGSIGQRKTPG) is disordered.

It belongs to the universal ribosomal protein uL3 family. Part of the 50S ribosomal subunit. Forms a cluster with proteins L14 and L19. Also contacts proteins L13 and L17.

One of the primary rRNA binding proteins, it binds directly near the 3'-end of the 23S rRNA, where it nucleates assembly of the 50S subunit. In Deinococcus radiodurans (strain ATCC 13939 / DSM 20539 / JCM 16871 / CCUG 27074 / LMG 4051 / NBRC 15346 / NCIMB 9279 / VKM B-1422 / R1), this protein is Large ribosomal subunit protein uL3 (rplC).